We begin with the raw amino-acid sequence, 153 residues long: Putative adenylate kinase (153 aa).

The ATP site is built by Gly-12, Gly-14, Lys-15, Ser-16, and Thr-17. The tract at residues 31-47 (EGNELAKEYGCLFDEEV) is NMP. Positions 94-104 (ARGYSEEKIQE) are LID. Arg-95 is an ATP binding site.

It belongs to the adenylate kinase family. AK6 subfamily. In terms of assembly, interacts with uS11. Not a structural component of 40S pre-ribosomes, but transiently interacts with them by binding to uS11.

The catalysed reaction is AMP + ATP = 2 ADP. It carries out the reaction ATP + H2O = ADP + phosphate + H(+). Functionally, broad-specificity nucleoside monophosphate (NMP) kinase that catalyzes the reversible transfer of the terminal phosphate group between nucleoside triphosphates and monophosphates. Also has ATPase activity. Involved in the late maturation steps of the 30S ribosomal particles, specifically 16S rRNA maturation. While NMP activity is not required for ribosome maturation, ATPase activity is. Associates transiently with small ribosomal subunit protein uS11. ATP hydrolysis breaks the interaction with uS11. May temporarily remove uS11 from the ribosome to enable a conformational change of the ribosomal RNA that is needed for the final maturation step of the small ribosomal subunit. This Thermoplasma volcanium (strain ATCC 51530 / DSM 4299 / JCM 9571 / NBRC 15438 / GSS1) protein is Putative adenylate kinase.